A 109-amino-acid polypeptide reads, in one-letter code: Cytochrome c oxidase subunit 6A1, mitochondrial (109 aa).

The N-terminal 24 residues, 1 to 24 (MAAAAGSRVFGLLGRSRLQLSRCM), are a transit peptide targeting the mitochondrion. Residues 25–34 (SSGAHGEEGS) lie on the Mitochondrial matrix side of the membrane. The helical transmembrane segment at 35–59 (ARMWKALTYFVALPGVGVSMLNVFL) threads the bilayer. The Mitochondrial intermembrane portion of the chain corresponds to 60 to 109 (KSHHGEEERPEFVAYPHLRIRSKPFPWGDGNHTLFHNPHVNPLPTGYEDE).

The protein belongs to the cytochrome c oxidase subunit 6A family. Component of the cytochrome c oxidase (complex IV, CIV), a multisubunit enzyme composed of 14 subunits. The complex is composed of a catalytic core of 3 subunits MT-CO1, MT-CO2 and MT-CO3, encoded in the mitochondrial DNA, and 11 supernumerary subunits COX4I1 (or COX4I2), COX5A, COX5B, COX6A2 (or COX6A1), COX6B1 (or COX6B2), COX6C, COX7A1 (or COX7A2), COX7B, COX7C, COX8B and NDUFA4, which are encoded in the nuclear genome. The complex exists as a monomer or a dimer and forms supercomplexes (SCs) in the inner mitochondrial membrane with NADH-ubiquinone oxidoreductase (complex I, CI) and ubiquinol-cytochrome c oxidoreductase (cytochrome b-c1 complex, complex III, CIII), resulting in different assemblies (supercomplex SCI(1)III(2)IV(1) and megacomplex MCI(2)III(2)IV(2)).

Its subcellular location is the mitochondrion inner membrane. It participates in energy metabolism; oxidative phosphorylation. In terms of biological role, component of the cytochrome c oxidase, the last enzyme in the mitochondrial electron transport chain which drives oxidative phosphorylation. The respiratory chain contains 3 multisubunit complexes succinate dehydrogenase (complex II, CII), ubiquinol-cytochrome c oxidoreductase (cytochrome b-c1 complex, complex III, CIII) and cytochrome c oxidase (complex IV, CIV), that cooperate to transfer electrons derived from NADH and succinate to molecular oxygen, creating an electrochemical gradient over the inner membrane that drives transmembrane transport and the ATP synthase. Cytochrome c oxidase is the component of the respiratory chain that catalyzes the reduction of oxygen to water. Electrons originating from reduced cytochrome c in the intermembrane space (IMS) are transferred via the dinuclear copper A center (CU(A)) of subunit 2 and heme A of subunit 1 to the active site in subunit 1, a binuclear center (BNC) formed by heme A3 and copper B (CU(B)). The BNC reduces molecular oxygen to 2 water molecules unsing 4 electrons from cytochrome c in the IMS and 4 protons from the mitochondrial matrix. The sequence is that of Cytochrome c oxidase subunit 6A1, mitochondrial (COX6A1) from Bos taurus (Bovine).